We begin with the raw amino-acid sequence, 66 residues long: Small ribosomal subunit protein eS27 (66 aa).

Residues Cys21, Cys24, Cys40, and Cys43 each coordinate Zn(2+). The C4-type zinc-finger motif lies at 21–43 (CPNCGNEQTIFSHATFPVRCLSC).

The protein belongs to the eukaryotic ribosomal protein eS27 family. As to quaternary structure, part of the 30S ribosomal subunit. Zn(2+) serves as cofactor.

This is Small ribosomal subunit protein eS27 from Saccharolobus solfataricus (strain ATCC 35092 / DSM 1617 / JCM 11322 / P2) (Sulfolobus solfataricus).